The chain runs to 190 residues: NADH-ubiquinone oxidoreductase chain 5 (190 aa).

6 helical membrane-spanning segments follow: residues 1–21, 68–88, 94–114, 118–138, 146–166, and 167–187; these read MVIS…CLIV, INIL…FVGL, NVTF…SILF, FIVF…FSLL, NVFL…CSNS, and LFLL…LIKM.

Belongs to the complex I subunit 5 family.

The protein resides in the mitochondrion inner membrane. It carries out the reaction a ubiquinone + NADH + 5 H(+)(in) = a ubiquinol + NAD(+) + 4 H(+)(out). Core subunit of the mitochondrial membrane respiratory chain NADH dehydrogenase (Complex I) that is believed to belong to the minimal assembly required for catalysis. Complex I functions in the transfer of electrons from NADH to the respiratory chain. The immediate electron acceptor for the enzyme is believed to be ubiquinone. This chain is NADH-ubiquinone oxidoreductase chain 5 (ND5), found in Arbacia lixula (Black urchin).